Here is a 304-residue protein sequence, read N- to C-terminus: Glycine--tRNA ligase alpha subunit (304 aa).

This sequence belongs to the class-II aminoacyl-tRNA synthetase family. In terms of assembly, tetramer of two alpha and two beta subunits.

The protein localises to the cytoplasm. It catalyses the reaction tRNA(Gly) + glycine + ATP = glycyl-tRNA(Gly) + AMP + diphosphate. The chain is Glycine--tRNA ligase alpha subunit from Vibrio atlanticus (strain LGP32) (Vibrio splendidus (strain Mel32)).